A 304-amino-acid chain; its full sequence is MPQQLSPINIETKKAISNARLKPLDIHYNESKPTTIQNTGKLVRINFKGGYISGGFLPNEYVLSSLHIYWGKEDDYGSNHLIDVYKYSGEINLVHWNKKKYSSYEEAKKHDDGLIIISIFLQVSDHKNVYFQKIVNQLDSIRSANTSAPFDSVFYLDNLLPSKLDYFTYLGTTINHSADAVWIIFPTPINIHSDQLSKFRTLLSSSNHEGKPHYITENYRNPYKLNDDTQVYYSGEIIRAATTPPARENYFMRWLSDLRETCFSYYQKYIEENKTFAIIAIVFVFILTAILFFMSRRYSREKQN.

Residues 1 to 235 (MPQQLSPINI…NDDTQVYYSG (235 aa)) enclose the Alpha-carbonic anhydrase domain. Over 1-275 (MPQQLSPINI…YQKYIEENKT (275 aa)) the chain is Virion surface. A helical membrane pass occupies residues 276-294 (FAIIAIVFVFILTAILFFM). The Intravirion portion of the chain corresponds to 295–304 (SRRYSREKQN).

It belongs to the alpha-carbonic anhydrase family. Homodimer; disulfide-linked. In terms of processing, apparently non-glycosylated.

It localises to the virion membrane. Functionally, binds to chondroitin sulfate on the cell surface to provide virion attachment to target cell. The sequence is that of Cell surface-binding protein OPG105 (OPG105) from Homo sapiens (Human).